The primary structure comprises 453 residues: UDP-N-acetylmuramate--L-alanine ligase (453 aa).

112-118 (GTHGKTT) contributes to the ATP binding site.

This sequence belongs to the MurCDEF family.

Its subcellular location is the cytoplasm. The catalysed reaction is UDP-N-acetyl-alpha-D-muramate + L-alanine + ATP = UDP-N-acetyl-alpha-D-muramoyl-L-alanine + ADP + phosphate + H(+). It participates in cell wall biogenesis; peptidoglycan biosynthesis. In terms of biological role, cell wall formation. This chain is UDP-N-acetylmuramate--L-alanine ligase, found in Lawsonia intracellularis (strain PHE/MN1-00).